The sequence spans 466 residues: Soluble pyridine nucleotide transhydrogenase (466 aa).

36–45 is a binding site for FAD; that stretch reads ERYQNVGGGC.

This sequence belongs to the class-I pyridine nucleotide-disulfide oxidoreductase family. In terms of assembly, homooligomer; probable homooctamer. It depends on FAD as a cofactor.

It localises to the cytoplasm. It carries out the reaction NAD(+) + NADPH = NADH + NADP(+). Functionally, conversion of NADPH, generated by peripheral catabolic pathways, to NADH, which can enter the respiratory chain for energy generation. The protein is Soluble pyridine nucleotide transhydrogenase of Escherichia coli O157:H7.